The following is a 254-amino-acid chain: 4-hydroxy-tetrahydrodipicolinate reductase (254 aa).

NAD(+)-binding positions include 8–13, 87–89, and 111–114; these read GASGKM, GTT, and ATNM. H143 functions as the Proton donor/acceptor in the catalytic mechanism. (S)-2,3,4,5-tetrahydrodipicolinate is bound at residue H144. The Proton donor role is filled by K147. Position 153–154 (153–154) interacts with (S)-2,3,4,5-tetrahydrodipicolinate; that stretch reads GT.

The protein belongs to the DapB family.

It is found in the cytoplasm. The catalysed reaction is (S)-2,3,4,5-tetrahydrodipicolinate + NAD(+) + H2O = (2S,4S)-4-hydroxy-2,3,4,5-tetrahydrodipicolinate + NADH + H(+). The enzyme catalyses (S)-2,3,4,5-tetrahydrodipicolinate + NADP(+) + H2O = (2S,4S)-4-hydroxy-2,3,4,5-tetrahydrodipicolinate + NADPH + H(+). The protein operates within amino-acid biosynthesis; L-lysine biosynthesis via DAP pathway; (S)-tetrahydrodipicolinate from L-aspartate: step 4/4. Functionally, catalyzes the conversion of 4-hydroxy-tetrahydrodipicolinate (HTPA) to tetrahydrodipicolinate. The polypeptide is 4-hydroxy-tetrahydrodipicolinate reductase (Campylobacter curvus (strain 525.92)).